Here is a 105-residue protein sequence, read N- to C-terminus: Defensin-like protein (105 aa).

The signal sequence occupies residues M1–A25. 4 cysteine pairs are disulfide-bonded: C28–C72, C39–C59, C45–C66, and C49–C68.

The protein belongs to the DEFL family. In terms of tissue distribution, flower. Found in petals, stamen and pistils, but not in sepals. In particular, accumulation in a configuration surrounding the inner reproductive whorls.

Its subcellular location is the secreted. The protein localises to the cell wall. It localises to the vacuole. Its function is as follows. Involved in floral organogenesis. May play a protective role in flowers by protecting the reproductive organs from potential pathogen attack. The sequence is that of Defensin-like protein (FST) from Nicotiana tabacum (Common tobacco).